The following is a 730-amino-acid chain: Regulatory factor X 4 (730 aa).

Polar residues predominate over residues 30 to 41 (YSSHTSLGNISN). The tract at residues 30–59 (YSSHTSLGNISNDETDEEKENRASKPHSTP) is disordered. Residues 61 to 136 (TLQWLGENYE…YHYYGIAVKE (76 aa)) constitute a DNA-binding region (RFX-type winged-helix). The segment at 500–532 (EPAISTPSPVPFSPAASSSSVEIPSATSPVSNQ) is disordered. The span at 512–528 (SPAASSSSVEIPSATSP) shows a compositional bias: low complexity.

It belongs to the RFX family.

It is found in the nucleus. In terms of biological role, required for neural tube ciliogenesis during embryogenesis. The chain is Regulatory factor X 4 from Xenopus laevis (African clawed frog).